The following is a 313-amino-acid chain: tRNA dimethylallyltransferase (313 aa).

Residue Gly-11 to Ser-18 participates in ATP binding. Thr-13–Ser-18 is a substrate binding site. Interaction with substrate tRNA regions lie at residues Asp-36–Thr-39, Gln-160–Arg-164, and Arg-244–Arg-249.

The protein belongs to the IPP transferase family. As to quaternary structure, monomer. The cofactor is Mg(2+).

It catalyses the reaction adenosine(37) in tRNA + dimethylallyl diphosphate = N(6)-dimethylallyladenosine(37) in tRNA + diphosphate. Its function is as follows. Catalyzes the transfer of a dimethylallyl group onto the adenine at position 37 in tRNAs that read codons beginning with uridine, leading to the formation of N6-(dimethylallyl)adenosine (i(6)A). In Bordetella pertussis (strain Tohama I / ATCC BAA-589 / NCTC 13251), this protein is tRNA dimethylallyltransferase.